Consider the following 151-residue polypeptide: Snaclec 3 (151 aa).

Positions 1-23 are cleaved as a signal peptide; it reads MGRLVFVSFSLLVVFLSLSGTAA. 3 disulfides stabilise this stretch: cysteine 25–cysteine 36, cysteine 53–cysteine 149, and cysteine 125–cysteine 141. Positions 32 to 150 constitute a C-type lectin domain; sequence YEGHCYKPFN…CGEINPFVCK (119 aa).

The protein belongs to the snaclec family. As to quaternary structure, heterodimer; disulfide-linked. As to expression, expressed by the venom gland.

Its subcellular location is the secreted. Its function is as follows. Interferes with one step of hemostasis (modulation of platelet aggregation, or coagulation cascade, for example). This chain is Snaclec 3, found in Sistrurus catenatus edwardsii (Desert massasauga).